The primary structure comprises 801 residues: Cation/H(+) antiporter 7 (801 aa).

13 helical membrane-spanning segments follow: residues 58–78, 83–103, 128–148, 154–174, 192–212, 223–243, 254–274, 287–307, 312–332, 340–360, 377–397, 407–427, and 438–458; these read PNLELIILSVFFFWQFFEILF, IPIPKMPSMMLGCVVINLFSY, GAFGFVMYWFLKGVSIDVGML, RAALIGFNTLVIPYISGYILM, EIILLQSLSSFAGVNGLLTDL, VQSCAAVTDLVIFIMVSGTVL, IVIVLVIGFLVYIVWPVMLWI, VYIYLVMATAYFVYMFWLNFF, YGWFIIGLATPAGPPLGSALI, VGVLLPLFGSLSMEQLDISWL, AISVILIVTVVKFVVTAITAF, IVLAMVLSNRSIFELGYLGYI, and FTIAALSVLVSSLLTPIAIEF.

The protein belongs to the monovalent cation:proton antiporter 2 (CPA2) transporter (TC 2.A.37) family. CHX (TC 2.A.37.4) subfamily. Expressed in pollen.

It localises to the membrane. May operate as a cation/H(+) antiporter. The sequence is that of Cation/H(+) antiporter 7 (CHX7) from Arabidopsis thaliana (Mouse-ear cress).